The chain runs to 206 residues: Small ribosomal subunit protein uS4 (206 aa).

An S4 RNA-binding domain is found at 96-156; that stretch reads QRLDNVVYRM…EKAKKQARIV (61 aa).

It belongs to the universal ribosomal protein uS4 family. As to quaternary structure, part of the 30S ribosomal subunit. Contacts protein S5. The interaction surface between S4 and S5 is involved in control of translational fidelity.

One of the primary rRNA binding proteins, it binds directly to 16S rRNA where it nucleates assembly of the body of the 30S subunit. Its function is as follows. With S5 and S12 plays an important role in translational accuracy. The sequence is that of Small ribosomal subunit protein uS4 from Alteromonas mediterranea (strain DSM 17117 / CIP 110805 / LMG 28347 / Deep ecotype).